A 426-amino-acid polypeptide reads, in one-letter code: Histidine--tRNA ligase (426 aa).

It belongs to the class-II aminoacyl-tRNA synthetase family. As to quaternary structure, homodimer.

It is found in the cytoplasm. It carries out the reaction tRNA(His) + L-histidine + ATP = L-histidyl-tRNA(His) + AMP + diphosphate + H(+). The chain is Histidine--tRNA ligase from Streptococcus gordonii (strain Challis / ATCC 35105 / BCRC 15272 / CH1 / DL1 / V288).